The chain runs to 366 residues: Chorismate synthase (366 aa).

2 residues coordinate NADP(+): Arg48 and Arg54. FMN-binding positions include 125–127, 238–239, Gly278, 293–297, and Arg319; these read RSS, NA, and KPTSS.

The protein belongs to the chorismate synthase family. Homotetramer. Requires FMNH2 as cofactor.

The catalysed reaction is 5-O-(1-carboxyvinyl)-3-phosphoshikimate = chorismate + phosphate. Its pathway is metabolic intermediate biosynthesis; chorismate biosynthesis; chorismate from D-erythrose 4-phosphate and phosphoenolpyruvate: step 7/7. In terms of biological role, catalyzes the anti-1,4-elimination of the C-3 phosphate and the C-6 proR hydrogen from 5-enolpyruvylshikimate-3-phosphate (EPSP) to yield chorismate, which is the branch point compound that serves as the starting substrate for the three terminal pathways of aromatic amino acid biosynthesis. This reaction introduces a second double bond into the aromatic ring system. In Dechloromonas aromatica (strain RCB), this protein is Chorismate synthase.